The chain runs to 347 residues: VIP36-like protein (347 aa).

Positions 1 to 43 are cleaved as a signal peptide; sequence MAAASRPSWWQRWRRRAWARDGAKLLLFLLLLGSGPGPRHVRA. The Lumenal portion of the chain corresponds to 44 to 312; sequence GQAVEYLKRE…VPPTPLSGLA (269 aa). The L-type lectin-like domain occupies 48-273; that stretch reads EYLKREHSLS…DVISLKLFEL (226 aa). A carbohydrate-binding residues include Ser-92 and Asp-127. Residues Asp-158, Tyr-160, and Asn-162 each coordinate Ca(2+). Position 160-162 (160-162) interacts with a carbohydrate; that stretch reads YPN. Residue Asn-180 is glycosylated (N-linked (GlcNAc...) asparagine). His-187 contributes to the a carbohydrate binding site. Position 190 (Asp-190) interacts with Ca(2+). The cysteines at positions 199 and 236 are disulfide-linked. An a carbohydrate-binding site is contributed by 257–259; the sequence is GDL. The helical transmembrane segment at 313–335 threads the bilayer; sequence LFLIVFFSLVFSVFAIVIGIILY. Over 336-347 the chain is Cytoplasmic; sequence NKWQDQSRKRFY. The Endoplasmic reticulum retention signal motif lies at 343-345; that stretch reads RKR.

It is found in the endoplasmic reticulum membrane. Its subcellular location is the golgi apparatus membrane. May be involved in the regulation of export from the endoplasmic reticulum of a subset of glycoproteins. May function as a regulator of ERGIC-53. The polypeptide is VIP36-like protein (Lman2l) (Mus musculus (Mouse)).